The primary structure comprises 498 residues: Probable malate:quinone oxidoreductase 2 (498 aa).

The protein belongs to the MQO family. Requires FAD as cofactor.

It carries out the reaction (S)-malate + a quinone = a quinol + oxaloacetate. The protein operates within carbohydrate metabolism; tricarboxylic acid cycle; oxaloacetate from (S)-malate (quinone route): step 1/1. This is Probable malate:quinone oxidoreductase 2 from Staphylococcus aureus (strain COL).